The primary structure comprises 606 residues: Probable methyltransferase PMT5 (606 aa).

The Cytoplasmic segment spans residues 1–20 (MRGSWYKSVSSVFGLRPRIR). The helical; Signal-anchor for type II membrane protein transmembrane segment at 21–41 (GLLFFIVGVVALVTILAPLTS) threads the bilayer. Topologically, residues 42 to 606 (NSYDSSSSST…LVCQKPFIKK (565 aa)) are lumenal. Asn-101 and Asn-409 each carry an N-linked (GlcNAc...) asparagine glycan.

It belongs to the methyltransferase superfamily.

Its subcellular location is the endoplasmic reticulum membrane. This Arabidopsis thaliana (Mouse-ear cress) protein is Probable methyltransferase PMT5.